The primary structure comprises 444 residues: Phosphoglucosamine mutase (444 aa).

The active-site Phosphoserine intermediate is the serine 102. Residues serine 102, aspartate 241, aspartate 243, and aspartate 245 each coordinate Mg(2+). Serine 102 carries the phosphoserine modification.

The protein belongs to the phosphohexose mutase family. Mg(2+) serves as cofactor. Post-translationally, activated by phosphorylation.

The enzyme catalyses alpha-D-glucosamine 1-phosphate = D-glucosamine 6-phosphate. Functionally, catalyzes the conversion of glucosamine-6-phosphate to glucosamine-1-phosphate. This chain is Phosphoglucosamine mutase, found in Acidovorax sp. (strain JS42).